Consider the following 182-residue polypeptide: Oligoribonuclease (182 aa).

Positions 8–171 (LIWIDLEMTG…DDIRESIKEL (164 aa)) constitute an Exonuclease domain. The active site involves tyrosine 129.

Belongs to the oligoribonuclease family.

The protein localises to the cytoplasm. Functionally, 3'-to-5' exoribonuclease specific for small oligoribonucleotides. This Haemophilus influenzae (strain 86-028NP) protein is Oligoribonuclease.